The chain runs to 191 residues: Holliday junction branch migration complex subunit RuvA (191 aa).

Residues 1 to 64 (MIGTLSGIIE…DNVPQLYGFT (64 aa)) form a domain I region. The interval 65 to 145 (DTEEQNCLKM…FNIMDKRGPS (81 aa)) is domain II. Positions 146–149 (VEDS) are flexible linker. The tract at residues 149–191 (SDALSALLSLGYEKTRVLNALEKVGVSHNLSDTVRFALKELSK) is domain III.

It belongs to the RuvA family. As to quaternary structure, homotetramer. Forms an RuvA(8)-RuvB(12)-Holliday junction (HJ) complex. HJ DNA is sandwiched between 2 RuvA tetramers; dsDNA enters through RuvA and exits via RuvB. An RuvB hexamer assembles on each DNA strand where it exits the tetramer. Each RuvB hexamer is contacted by two RuvA subunits (via domain III) on 2 adjacent RuvB subunits; this complex drives branch migration. In the full resolvosome a probable DNA-RuvA(4)-RuvB(12)-RuvC(2) complex forms which resolves the HJ.

Its subcellular location is the cytoplasm. Functionally, the RuvA-RuvB-RuvC complex processes Holliday junction (HJ) DNA during genetic recombination and DNA repair, while the RuvA-RuvB complex plays an important role in the rescue of blocked DNA replication forks via replication fork reversal (RFR). RuvA specifically binds to HJ cruciform DNA, conferring on it an open structure. The RuvB hexamer acts as an ATP-dependent pump, pulling dsDNA into and through the RuvAB complex. HJ branch migration allows RuvC to scan DNA until it finds its consensus sequence, where it cleaves and resolves the cruciform DNA. The protein is Holliday junction branch migration complex subunit RuvA of Anaplasma phagocytophilum (strain HZ).